A 764-amino-acid chain; its full sequence is 5-methyltetrahydropteroyltriglutamate--homocysteine methyltransferase (764 aa).

5-methyltetrahydropteroyltri-L-glutamate contacts are provided by residues 16–19 (RELK) and Lys-117. Residues 442-444 (IGS) and Glu-495 each bind L-homocysteine. Residues 442-444 (IGS) and Glu-495 each bind L-methionine. Residues 526 to 527 (RC) and Trp-572 contribute to the 5-methyltetrahydropteroyltri-L-glutamate site. Position 610 (Asp-610) interacts with L-homocysteine. Asp-610 contributes to the L-methionine binding site. Glu-616 serves as a coordination point for 5-methyltetrahydropteroyltri-L-glutamate. The Zn(2+) site is built by His-652, Cys-654, and Glu-676. Catalysis depends on His-705, which acts as the Proton donor. Cys-737 contributes to the Zn(2+) binding site.

This sequence belongs to the vitamin-B12 independent methionine synthase family. The cofactor is Zn(2+).

It catalyses the reaction 5-methyltetrahydropteroyltri-L-glutamate + L-homocysteine = tetrahydropteroyltri-L-glutamate + L-methionine. It participates in amino-acid biosynthesis; L-methionine biosynthesis via de novo pathway; L-methionine from L-homocysteine (MetE route): step 1/1. Catalyzes the transfer of a methyl group from 5-methyltetrahydrofolate to homocysteine resulting in methionine formation. This chain is 5-methyltetrahydropteroyltriglutamate--homocysteine methyltransferase, found in Bordetella bronchiseptica (strain ATCC BAA-588 / NCTC 13252 / RB50) (Alcaligenes bronchisepticus).